Reading from the N-terminus, the 406-residue chain is Argininosuccinate synthase (406 aa).

ATP contacts are provided by residues 10–18 (AYSGGLDTS) and Ala-37. Positions 88 and 93 each coordinate L-citrulline. Gly-118 is a binding site for ATP. 3 residues coordinate L-aspartate: Thr-120, Asn-124, and Asp-125. Asn-124 contacts L-citrulline. L-citrulline is bound by residues Arg-128, Ser-179, Ser-188, Glu-264, and Tyr-276.

It belongs to the argininosuccinate synthase family. Type 1 subfamily. Homotetramer.

Its subcellular location is the cytoplasm. It carries out the reaction L-citrulline + L-aspartate + ATP = 2-(N(omega)-L-arginino)succinate + AMP + diphosphate + H(+). It functions in the pathway amino-acid biosynthesis; L-arginine biosynthesis; L-arginine from L-ornithine and carbamoyl phosphate: step 2/3. In Roseobacter denitrificans (strain ATCC 33942 / OCh 114) (Erythrobacter sp. (strain OCh 114)), this protein is Argininosuccinate synthase.